A 464-amino-acid polypeptide reads, in one-letter code: Hepatocyte nuclear factor 4-alpha (464 aa).

The segment at residues 57–132 (NSLCAICGDR…AGMKKEAVQN (76 aa)) is a DNA-binding region (nuclear receptor). NR C4-type zinc fingers lie at residues 60–80 (CAIC…CDGC) and 96–120 (CRFS…LKKC). An NR LBD domain is found at 147–376 (SSLPSINVLI…NLLQEMLLGG (230 aa)). Residues 367-375 (NLLQEMLLG) carry the 9aaTAD motif. Over residues 410 to 421 (SQLHNGQMSTPE) the composition is skewed to polar residues. A disordered region spans residues 410 to 433 (SQLHNGQMSTPETPQPSPPAGSGA).

The protein belongs to the nuclear hormone receptor family. NR2 subfamily. As to quaternary structure, homodimerization is required for HNF4-alpha to bind to its recognition site. Expressed in liver and kidney.

It localises to the nucleus. Its function is as follows. Transcriptional regulator; binds and activates the promoter for the HNF1-alpha gene. Potential initiator of a transcriptional cascade within a subset of cells committed to a specific developmental program. Could be a determinant for asymmetry in early development. May play a role in the regulation of the circadian clock. This is Hepatocyte nuclear factor 4-alpha (hnf4a) from Xenopus laevis (African clawed frog).